A 149-amino-acid chain; its full sequence is UPF0260 protein Pmen_1776 (149 aa).

The protein belongs to the UPF0260 family.

This chain is UPF0260 protein Pmen_1776, found in Ectopseudomonas mendocina (strain ymp) (Pseudomonas mendocina).